The sequence spans 64 residues: MSISVNCPTCQTKVEWSEKSPARPFCSERCKLIDLGEWANEEKSIPGEPVVIANDDYNNEESDY.

4 residues coordinate Zn(2+): cysteine 7, cysteine 10, cysteine 26, and cysteine 30. Residues 44–64 (SIPGEPVVIANDDYNNEESDY) are disordered.

The protein belongs to the DNA gyrase inhibitor YacG family. In terms of assembly, interacts with GyrB. The cofactor is Zn(2+).

Functionally, inhibits all the catalytic activities of DNA gyrase by preventing its interaction with DNA. Acts by binding directly to the C-terminal domain of GyrB, which probably disrupts DNA binding by the gyrase. This chain is DNA gyrase inhibitor YacG, found in Idiomarina loihiensis (strain ATCC BAA-735 / DSM 15497 / L2-TR).